Reading from the N-terminus, the 847-residue chain is Protein IRS1 (847 aa).

Disordered regions lie at residues 1 to 82, 607 to 627, and 715 to 847; these read MAQR…NFWH, WLMEQPPPPSRQTKPDAATMP, and QVIP…HVHH. Residues 16-25 are compositionally biased toward gly residues; sequence RGRGAGGPSG. Over residues 26–56 the composition is skewed to low complexity; it reads VGSSPPSSCVPMGATSTAGTGASAAPTATPG. Over residues 723-733 the composition is skewed to acidic residues; it reads EPEDDDEDPTY. The segment covering 833-847 has biased composition (basic residues); that stretch reads RPKKCQTHAPHHVHH.

This sequence belongs to the herpesviridae US22 family. As to quaternary structure, interacts (via N-terminus) with the viral DNA polymerase accessory subunit UL44. Interacts (via C-terminus) with host EIF2AK2.

It localises to the virion. It is found in the host cytoplasm. The protein localises to the host nucleus. Its function is as follows. Acts as a transactivator along with IE2, and is required for oriLyt-dependent DNA replication in the transient transfection replication assay using native promoters. This chain is Protein IRS1 (IRS1), found in Human cytomegalovirus (strain Merlin) (HHV-5).